A 453-amino-acid polypeptide reads, in one-letter code: Phenolic glucoside malonyltransferase 1 (453 aa).

His-165 serves as the catalytic Proton acceptor. An HXXXD motif motif is present at residues 165-169 (HVAGD). Malonyl-CoA-binding positions include Lys-254, His-266, and 268 to 269 (TS). Catalysis depends on Asp-394, which acts as the Proton acceptor. The DFGWG motif signature appears at 394-398 (DFGWG).

The protein belongs to the plant acyltransferase family. Phenolic glucoside malonyltransferase subfamily. Monomer. Highly expressed in flower. Also expressed in flower bud, stem, root and leaf.

The enzyme catalyses a flavonol 3-O-beta-D-glucoside + malonyl-CoA = a flavonol 3-O-(6-O-malonyl-beta-D-glucoside) + CoA. The catalysed reaction is a flavonol 7-O-beta-D-glucoside + malonyl-CoA = a flavonol 7-O-(6-O-malonyl-beta-D-glucoside) + CoA. In terms of biological role, malonyltransferase with broad substrate specificity acting on phenolic glucosides including xenobiotic naphthols. Has activity against flavonoid 7-O-glucosides, flavonoid 3-O-glucosides and naphthol glucosides, and to a lesser extent against coumarin glucosides in vitro. Prefers malonyl-CoA as an acyl donor, but also active with succinyl-CoA and methylmalonyl-CoA, but not with acetyl-CoA. In Nicotiana tabacum (Common tobacco), this protein is Phenolic glucoside malonyltransferase 1.